The primary structure comprises 558 residues: V-set and immunoglobulin domain-containing protein 10 (558 aa).

A signal peptide spans 1–20 (MAGLRVLLCLGALLARQGSA). At 21–426 (GLQLLLNPSR…IWLSVKEPLN (406 aa)) the chain is on the extracellular side. N-linked (GlcNAc...) asparagine glycans are attached at residues N32, N60, N121, N150, N159, and N218. Ig-like C2-type domains follow at residues 37-140 (PNSE…RLRV), 144-235 (PAYV…RKVT), 248-327 (PQCS…VKLS), and 332-420 (PSQP…IWLS). C65 and C124 are joined by a disulfide. Intrachain disulfides connect C174/C221 and C265/C308. N344 carries N-linked (GlcNAc...) asparagine glycosylation. A disulfide bond links C349 and C404. The chain crosses the membrane as a helical span at residues 427–447 (IGGIVGTVVSLLLLGLAVVSG). At 448 to 558 (LTLYYSPAFW…GIVQEDGKPV (111 aa)) the chain is on the cytoplasmic side. Residues 477–506 (DSEEEEEEEEEEEEKEDVAEEVEQETNETE) are compositionally biased toward acidic residues. Disordered stretches follow at residues 477 to 515 (DSEE…ISKH) and 532 to 558 (MGNG…GKPV).

It localises to the membrane. In Mus musculus (Mouse), this protein is V-set and immunoglobulin domain-containing protein 10 (Vsig10).